A 564-amino-acid polypeptide reads, in one-letter code: Probable diguanylate cyclase DgcQ (564 aa).

Transmembrane regions (helical) follow at residues 20–40 and 360–380; these read LGPG…STLL and IALT…WYVI. In terms of domain architecture, GGDEF spans 428-563; sequence HPFSVIQVDL…GRNRVFASDN (136 aa). Aspartate 436 provides a ligand contact to Mg(2+). Residues asparagine 444, histidine 449, and aspartate 453 each contribute to the substrate site. Position 479 (glutamate 479) interacts with Mg(2+). Glutamate 479 functions as the Proton acceptor in the catalytic mechanism.

Homodimer. Mg(2+) is required as a cofactor.

Its subcellular location is the cell inner membrane. It carries out the reaction 2 GTP = 3',3'-c-di-GMP + 2 diphosphate. It participates in glycan metabolism; bacterial cellulose biosynthesis. It functions in the pathway purine metabolism; 3',5'-cyclic di-GMP biosynthesis. Its function is as follows. Catalyzes the synthesis of cyclic-di-GMP (c-di-GMP) via the condensation of 2 GTP molecules. Cyclic-di-GMP is a second messenger which controls cell surface-associated traits in bacteria. Involved in the regulation of cellulose production. The polypeptide is Probable diguanylate cyclase DgcQ (Escherichia coli O157:H7).